A 149-amino-acid polypeptide reads, in one-letter code: Flavodoxin YqcA (149 aa).

In terms of domain architecture, Flavodoxin-like spans 4 to 145 (IGIFVGTMYG…ESNPWVEQWG (142 aa)). Residues 10–15 (TMYGNS) and 99–101 (NFC) contribute to the FMN site.

It belongs to the flavodoxin family. MioC subfamily. As to quaternary structure, monomer. FMN serves as cofactor.

Probable electron transporter. This chain is Flavodoxin YqcA (yqcA), found in Escherichia coli (strain K12).